The sequence spans 174 residues: Urease accessory protein UreE (174 aa).

Positions 146 to 174 are disordered; that stretch reads NGAYATGGHAHDHDGEPEHVHGPGCQHAH. The span at 154 to 166 shows a compositional bias: basic and acidic residues; that stretch reads HAHDHDGEPEHVH.

This sequence belongs to the UreE family.

It localises to the cytoplasm. Involved in urease metallocenter assembly. Binds nickel. Probably functions as a nickel donor during metallocenter assembly. The chain is Urease accessory protein UreE from Albidiferax ferrireducens (strain ATCC BAA-621 / DSM 15236 / T118) (Rhodoferax ferrireducens).